The primary structure comprises 301 residues: NADH-cytochrome b5 reductase 2 (301 aa).

A helical membrane pass occupies residues 14-30 (FLVPFAGATALSIGLAL). An FAD-binding FR-type domain is found at 51–155 (NEWVDLKLSK…KGPIVKWKWE (105 aa)). 158–193 (QFKSIALIGGGTGITPLYQLLHQITSNPKDNTKVNL) contributes to the FAD binding site.

Belongs to the flavoprotein pyridine nucleotide cytochrome reductase family. Requires FAD as cofactor.

Its subcellular location is the mitochondrion outer membrane. The catalysed reaction is 2 Fe(III)-[cytochrome b5] + NADH = 2 Fe(II)-[cytochrome b5] + NAD(+) + H(+). In terms of biological role, may mediate the reduction of outer membrane cytochrome b5. This chain is NADH-cytochrome b5 reductase 2 (MCR1), found in Candida albicans (strain SC5314 / ATCC MYA-2876) (Yeast).